A 149-amino-acid chain; its full sequence is Transcriptional repressor NrdR (149 aa).

A zinc finger lies at 3–34; that stretch reads CPFCFAVDTKVIDSRLVGEGSSVRRRRQCLVC. The 91-residue stretch at 49-139 folds into the ATP-cone domain; the sequence is PRVVKSNDVR…VYRSFEDIKE (91 aa).

This sequence belongs to the NrdR family. The cofactor is Zn(2+).

Its function is as follows. Negatively regulates transcription of bacterial ribonucleotide reductase nrd genes and operons by binding to NrdR-boxes. The protein is Transcriptional repressor NrdR of Escherichia coli O139:H28 (strain E24377A / ETEC).